The chain runs to 147 residues: Hemoglobin subunit gamma (147 aa).

The region spanning 3-147 (NFTAEDKAAI…VASALASRYH (145 aa)) is the Globin domain. Positions 64 and 93 each coordinate heme b.

It belongs to the globin family. In terms of assembly, heterotetramer of two alpha chains and two gamma chains in fetal hemoglobin (Hb F). As to expression, red blood cells.

Gamma chains make up the fetal hemoglobin F, in combination with alpha chains. This is Hemoglobin subunit gamma (HBG) from Alouatta seniculus (Red howler monkey).